The sequence spans 463 residues: Perilipin-5 (463 aa).

The disordered stretch occupies residues 1-32 (MDQRGEDTTLAPHSRMSGDQTAQDPGSSLGEL). Residues 1 to 123 (MDQRGEDTTL…KLEEKLPFLQ (123 aa)) form an interaction with LIPE region. Residues 1–188 (MDQRGEDTTL…RFLPMTEAEL (188 aa)) form an essential for lipid droplet targeting region. 3 positions are modified to phosphoserine: S17, S163, and S337. Positions 17-26 (SGDQTAQDPG) are enriched in polar residues. Residues 200–463 (VGTVEEQRQQ…KHTMMPELDF (264 aa)) form an interaction with PNPLA2 and ABHD5 region. Residues 433-463 (AWEAESADPGGQEAEPPRGQGKHTMMPELDF) are disordered. The interval 444–463 (QEAEPPRGQGKHTMMPELDF) is necessary for mitochondria recruitment at the lipid droplet surface.

Belongs to the perilipin family. As to quaternary structure, homooligomer. Interacts with PNPLA2; prevents interaction of PNPLA2 with ABHD5. Interacts with ABHD5; targets ABHD5 to lipid droplets and promotes interaction of ABHD5 with PNPLA2. Interacts with LIPE. Phosphorylated by PKA. Phosphorylated on serine in skeletal muscle at rest or with lipolytic stimulation. As to expression, highly expressed in oxidative tissues, including heart, liver, brown adipose tissue (BAT) and slow-twitch fibers of skeletal muscle. Lower expression in epididymal white adipose tissue and anterior tibialis and quadriceps. Expressed in adrenal glands. Isoform 2 has the highest expression in heart.

The protein resides in the lipid droplet. Its subcellular location is the cytoplasm. The protein localises to the mitochondrion. In terms of biological role, lipid droplet-associated protein that maintains the balance between lipogenesis and lipolysis and also regulates fatty acid oxidation in oxidative tissues. Recruits mitochondria to the surface of lipid droplets and is involved in lipid droplet homeostasis by regulating both the storage of fatty acids in the form of triglycerides and the release of fatty acids for mitochondrial fatty acid oxidation. In lipid droplet triacylglycerol hydrolysis, plays a role as a scaffolding protein for three major key lipolytic players: ABHD5, PNPLA2 and LIPE. Reduces the triacylglycerol hydrolase activity of PNPLA2 by recruiting and sequestering PNPLA2 to lipid droplets. Phosphorylation by PKA enables lipolysis probably by promoting release of ABHD5 from the perilipin scaffold and by facilitating interaction of ABHD5 with PNPLA2. Also increases lipolysis through interaction with LIPE and upon PKA-mediated phosphorylation of LIPE. This Mus musculus (Mouse) protein is Perilipin-5 (Plin5).